A 224-amino-acid chain; its full sequence is 7-cyano-7-deazaguanine synthase 1 (224 aa).

ATP is bound at residue 10 to 20; the sequence is LSGGLDSMVCA. Residues C189, C199, C202, and C205 each contribute to the Zn(2+) site.

It belongs to the QueC family. Zn(2+) serves as cofactor.

The catalysed reaction is 7-carboxy-7-deazaguanine + NH4(+) + ATP = 7-cyano-7-deazaguanine + ADP + phosphate + H2O + H(+). The protein operates within purine metabolism; 7-cyano-7-deazaguanine biosynthesis. In terms of biological role, catalyzes the ATP-dependent conversion of 7-carboxy-7-deazaguanine (CDG) to 7-cyano-7-deazaguanine (preQ(0)). This chain is 7-cyano-7-deazaguanine synthase 1, found in Sphingopyxis alaskensis (strain DSM 13593 / LMG 18877 / RB2256) (Sphingomonas alaskensis).